We begin with the raw amino-acid sequence, 213 residues long: Large ribosomal subunit protein uL3 (213 aa).

Residues 131–168 (GPMSHGSKNHRLPGSTGAGTTPGRVYPGKRMAGRSGND) form a disordered region.

Belongs to the universal ribosomal protein uL3 family. As to quaternary structure, part of the 50S ribosomal subunit. Forms a cluster with proteins L14 and L19.

Functionally, one of the primary rRNA binding proteins, it binds directly near the 3'-end of the 23S rRNA, where it nucleates assembly of the 50S subunit. The polypeptide is Large ribosomal subunit protein uL3 (Synechococcus elongatus (strain ATCC 33912 / PCC 7942 / FACHB-805) (Anacystis nidulans R2)).